The following is a 450-amino-acid chain: Na(+)/H(+) antiporter NhaA (450 aa).

11 helical membrane-spanning segments follow: residues 24–44, 75–95, 111–131, 140–160, 169–189, 196–216, 224–244, 318–338, 352–372, 390–410, and 422–442; these read FFAI…LALV, LILW…GLEI, ALPI…YLAL, GWGV…SLLG, VFLT…IAFF, FSFL…NWLG, LLVG…ATIA, WVAW…TVSA, IFFG…WLLV, GIGW…TLAF, and SILC…RVLL.

It belongs to the NhaA Na(+)/H(+) (TC 2.A.33) antiporter family.

It localises to the cell inner membrane. It carries out the reaction Na(+)(in) + 2 H(+)(out) = Na(+)(out) + 2 H(+)(in). Its function is as follows. Na(+)/H(+) antiporter that extrudes sodium in exchange for external protons. This is Na(+)/H(+) antiporter NhaA from Oleidesulfovibrio alaskensis (strain ATCC BAA-1058 / DSM 17464 / G20) (Desulfovibrio alaskensis).